The sequence spans 473 residues: MKHKIRHIHFVGIGGSGMGGIAEVLINLGFQISGSDMHSNSTTRRLQCLGAVIHHTHAAENIQSADAVVISTAIHSDNPEVIAARERRIPVVPRAMMLAELLRLRRGIAIAGTHGKTTTTSLVASILAEAGQDPTFVIGGKLKTVDSHARLGKGEFIVVEADESDASFLYLQPVLTVVTNIDADHMSTYEHDFNRLKQTFVEFIEHLPFYGMAVLCVDDPHVREIISMITRPVTTYGIASEDAQICATNIRHDRCRMHFLAHIGVNGSPRTLEVTLNLPGKHNVLNALAAIAVGNELGVPDEAIVKALATFGGVDRRFQQYGEIPLPDQGSFALIDDYGHHPAEIAATMAAARNAFPGRRLVLAFQPHRYSRTRDLFEDFVRVLSGADVLLLTEVYPAGEEPIIAADSKSLARAIRVQGKIEPIYIEQIDELKATIHTIAQDGDVILIMGAGSIGKSAPDLAEPAMKLTLITG.

An ATP-binding site is contributed by 112–118; that stretch reads GTHGKTT.

This sequence belongs to the MurCDEF family.

The protein localises to the cytoplasm. The enzyme catalyses UDP-N-acetyl-alpha-D-muramate + L-alanine + ATP = UDP-N-acetyl-alpha-D-muramoyl-L-alanine + ADP + phosphate + H(+). It functions in the pathway cell wall biogenesis; peptidoglycan biosynthesis. Functionally, cell wall formation. The polypeptide is UDP-N-acetylmuramate--L-alanine ligase (Nitrosomonas europaea (strain ATCC 19718 / CIP 103999 / KCTC 2705 / NBRC 14298)).